Here is a 1190-residue protein sequence, read N- to C-terminus: Tight junction protein 2 (1190 aa).

The residue at position 16 (Ser16) is a Phosphoserine. In terms of domain architecture, PDZ 1 spans 33 to 120; that stretch reads TVTLQKDSKR…VAAIVVKRPR (88 aa). Ser130, Ser150, Ser153, Ser163, Ser168, Ser170, Ser174, Ser200, Ser220, Ser232, Ser244, Ser266, Ser325, Ser398, Ser400, Ser406, Ser415, Ser424, Ser430, and Ser431 each carry phosphoserine. The tract at residues 152-306 is disordered; the sequence is RSGYSERSRL…PEPRGRPGPI (155 aa). Basic and acidic residues predominate over residues 169 to 291; it reads RSWEDSPERG…PRSRSREHPH (123 aa). The PDZ 2 domain maps to 307–385; it reads GVLLMKSRAN…KLQLVVLRDS (79 aa). Positions 408-506 are disordered; sequence IESNRSFSPE…RPSPEDEAIY (99 aa). Over residues 415-446 the composition is skewed to basic and acidic residues; the sequence is SPEERRHQYSDYDYHSSSEKLKERPSSREDTP. Thr455 bears the Phosphothreonine mark. Ser499 carries the post-translational modification Phosphoserine. The PDZ 3 domain occupies 509-590; sequence NTKMVRFKKG…GEMVTILAQS (82 aa). Tyr574 carries the phosphotyrosine modification. An SH3 domain is found at 604–669; that stretch reads GDSFFIRSHF…PNKSRAEQMA (66 aa). Residues 678–876 enclose the Guanylate kinase-like domain; that stretch reads NAGDRADFWR…WFGSLKDTIQ (199 aa). 2 positions are modified to phosphoserine: Ser702 and Ser902. Thr905 bears the Phosphothreonine mark. Phosphoserine is present on residues Ser913 and Ser920. Disordered regions lie at residues 920–1079 and 1105–1190; these read SDFE…KSVL and NARI…DTEL. 2 positions are modified to phosphothreonine: Thr925 and Thr933. A compositionally biased stretch (basic and acidic residues) spans 956 to 967; it reads VQHEESIRKPSP. 6 positions are modified to phosphoserine: Ser966, Ser978, Ser986, Ser1006, Ser1067, and Ser1068. Positions 994–1014 are enriched in basic and acidic residues; that stretch reads EPPKAKTQNKEESYDFSKSYE. Acidic residues predominate over residues 1060 to 1072; that stretch reads EGEEVGESSEEQD. Tyr1118 is modified (phosphotyrosine). At Thr1131 the chain carries Phosphothreonine. Ser1147 and Ser1159 each carry phosphoserine. The span at 1166–1175 shows a compositional bias: basic and acidic residues; that stretch reads YRQQLSEHSK. Residues 1188 to 1190 are interaction with SCRIB; sequence TEL.

The protein belongs to the MAGUK family. As to quaternary structure, homodimer. Interacts (via PDZ2 domain) with TJP1/ZO1 (via PDZ2 domain). Interacts with OCLN. Interacts with UBN1. Interacts with SAFB in the nucleus. Interacts with SCRIB. Interacts with USP53 (via the C-terminal region). Interacts with claudins, including CLDN1, CLDN2, CLDN3, CLDN5 and CLDN7. Interacts with CLDN18. Interacts (via N-terminus) with CTNNA1. This protein is found in epithelial cell junctions. Isoform A1 is abundant in the heart and brain. Detected in brain and skeletal muscle. It is present almost exclusively in normal tissues. Isoform C1 is expressed at high level in the kidney, pancreas, heart and placenta. Not detected in brain and skeletal muscle. Found in normal as well as in most neoplastic tissues.

It is found in the cell junction. It localises to the adherens junction. The protein localises to the cell membrane. The protein resides in the tight junction. Its subcellular location is the nucleus. In terms of biological role, plays a role in tight junctions and adherens junctions. Acts as a positive regulator of RANKL-induced osteoclast differentiation, potentially via mediating downstream transcriptional activity. The protein is Tight junction protein 2 of Homo sapiens (Human).